Consider the following 98-residue polypeptide: Integration host factor subunit alpha (98 aa).

The tract at residues Phe52–Ile73 is disordered.

The protein belongs to the bacterial histone-like protein family. Heterodimer of an alpha and a beta chain.

Its function is as follows. This protein is one of the two subunits of integration host factor, a specific DNA-binding protein that functions in genetic recombination as well as in transcriptional and translational control. This Aeromonas hydrophila subsp. hydrophila (strain ATCC 7966 / DSM 30187 / BCRC 13018 / CCUG 14551 / JCM 1027 / KCTC 2358 / NCIMB 9240 / NCTC 8049) protein is Integration host factor subunit alpha.